The chain runs to 602 residues: Elongation factor 4 (602 aa).

Residues 7-189 (DKIRNFSIVA…AIVTRLPPPK (183 aa)) enclose the tr-type G domain. GTP is bound by residues 19-24 (DHGKST) and 136-139 (NKVD).

Belongs to the TRAFAC class translation factor GTPase superfamily. Classic translation factor GTPase family. LepA subfamily.

The protein resides in the cell inner membrane. The catalysed reaction is GTP + H2O = GDP + phosphate + H(+). Its function is as follows. Required for accurate and efficient protein synthesis under certain stress conditions. May act as a fidelity factor of the translation reaction, by catalyzing a one-codon backward translocation of tRNAs on improperly translocated ribosomes. Back-translocation proceeds from a post-translocation (POST) complex to a pre-translocation (PRE) complex, thus giving elongation factor G a second chance to translocate the tRNAs correctly. Binds to ribosomes in a GTP-dependent manner. This chain is Elongation factor 4, found in Caulobacter vibrioides (strain NA1000 / CB15N) (Caulobacter crescentus).